Here is an 86-residue protein sequence, read N- to C-terminus: Serine protease inhibitor Kazal-type 2 (86 aa).

Positions 1-16 (MLRLVLLLLATDFAAS) are cleaved as a signal peptide. The Kazal-like domain occupies 32–86 (QFRTPDCHRFDYPVCSKHLSPVCGTDMNTYGNECTLCMKIREDGSHINIIKDEPC). Cystine bridges form between Cys-38–Cys-68, Cys-46–Cys-65, and Cys-54–Cys-86.

Its subcellular location is the secreted. The protein localises to the cytoplasmic vesicle. It is found in the secretory vesicle. The protein resides in the acrosome. Functionally, as a strong inhibitor of acrosin, it is required for normal spermiogenesis. It probably hinders premature activation of proacrosin and other proteases, thus preventing the cascade of events leading to spermiogenesis defects. May be involved in the regulation of serine protease-dependent germ cell apoptosis. It also inhibits trypsin. This is Serine protease inhibitor Kazal-type 2 (Spink2) from Rattus norvegicus (Rat).